A 365-amino-acid chain; its full sequence is 3-dehydroquinate synthase (365 aa).

NAD(+) is bound by residues 107–111, 131–132, Lys-144, and Lys-153; these read GVIGD and TT. The Zn(2+) site is built by Glu-186, His-251, and His-268.

This sequence belongs to the sugar phosphate cyclases superfamily. Dehydroquinate synthase family. It depends on Co(2+) as a cofactor. Requires Zn(2+) as cofactor. NAD(+) is required as a cofactor.

Its subcellular location is the cytoplasm. It carries out the reaction 7-phospho-2-dehydro-3-deoxy-D-arabino-heptonate = 3-dehydroquinate + phosphate. It participates in metabolic intermediate biosynthesis; chorismate biosynthesis; chorismate from D-erythrose 4-phosphate and phosphoenolpyruvate: step 2/7. Functionally, catalyzes the conversion of 3-deoxy-D-arabino-heptulosonate 7-phosphate (DAHP) to dehydroquinate (DHQ). This is 3-dehydroquinate synthase from Picosynechococcus sp. (strain ATCC 27264 / PCC 7002 / PR-6) (Agmenellum quadruplicatum).